Consider the following 393-residue polypeptide: Protein TsgA (393 aa).

12 consecutive transmembrane segments (helical) span residues 11-31, 51-71, 78-98, 101-121, 134-154, 162-182, 206-226, 245-265, 273-293, 297-317, 332-352, and 361-381; these read WISF…GMVM, FLNA…EIVP, FGFL…SLAL, AAMF…TFLI, LLFT…IAAF, WYWV…LTFG, IGVL…LGFI, TLVS…SFIL, ILTV…TGTP, AWSI…IITL, FVLT…GPIV, and LLTA…LGFV.

It belongs to the major facilitator superfamily. TsgA family.

The protein resides in the cell inner membrane. This is Protein TsgA from Escherichia coli O7:K1 (strain IAI39 / ExPEC).